A 114-amino-acid chain; its full sequence is PDZK1-interacting protein 1 (114 aa).

At 1–28 (MSALSLVILGLLMAVPPASCQQGLGNLQ) the chain is on the extracellular side. The helical transmembrane segment at 29–51 (PWMQGLIAVAVFLVLVAIAFAIN) threads the bilayer. At 52-114 (HFWCQEEREP…EEGRVHSTPM (63 aa)) the chain is on the cytoplasmic side. Phosphoserine is present on serine 85. Residues 92 to 114 (SNEHENAYENTSEEEGRVHSTPM) are disordered. Over residues 105–114 (EEGRVHSTPM) the composition is skewed to basic and acidic residues.

It belongs to the PDZK1-interacting protein 1/SMIM24 family. In terms of assembly, forms a heterodimer (via N-terminal transmembrane helix) with SLC5A2/SGLT2 (via TM13); this interaction enhances SLC5A2 transporter activity. Interacts with PDZK1.

It is found in the apical cell membrane. Functionally, auxiliary protein of electrogenic Na(+)-coupled sugar symporter SLC5A2/SGLT2 and SLC5A1/SGLT1. Essential for the transporter activity of SLC5A2/SGLT2 but not SLC5A1/SGLT1. The sequence is that of PDZK1-interacting protein 1 from Sus scrofa (Pig).